A 479-amino-acid chain; its full sequence is Probable glycine dehydrogenase (decarboxylating) subunit 2 (479 aa).

Position 265 is an N6-(pyridoxal phosphate)lysine (lysine 265).

This sequence belongs to the GcvP family. C-terminal subunit subfamily. In terms of assembly, the glycine cleavage system is composed of four proteins: P, T, L and H. In this organism, the P 'protein' is a heterodimer of two subunits. It depends on pyridoxal 5'-phosphate as a cofactor.

The enzyme catalyses N(6)-[(R)-lipoyl]-L-lysyl-[glycine-cleavage complex H protein] + glycine + H(+) = N(6)-[(R)-S(8)-aminomethyldihydrolipoyl]-L-lysyl-[glycine-cleavage complex H protein] + CO2. Its function is as follows. The glycine cleavage system catalyzes the degradation of glycine. The P protein binds the alpha-amino group of glycine through its pyridoxal phosphate cofactor; CO(2) is released and the remaining methylamine moiety is then transferred to the lipoamide cofactor of the H protein. The sequence is that of Probable glycine dehydrogenase (decarboxylating) subunit 2 from Pseudothermotoga lettingae (strain ATCC BAA-301 / DSM 14385 / NBRC 107922 / TMO) (Thermotoga lettingae).